Consider the following 689-residue polypeptide: MFTMTRAMEEALFQHFMHQKLGIAYAIHKPFPFFEGLLDNSIITKRMYMESLEACRNLIPVSRVVHNILTQLERTFNLSLLVTLFSQINLREYPNLVTIYRSFKRVGASYEWQSRDTPILLEAPTGLAEGSSLHTPLALPPPQPPQPSCSPCAPRVSEPGTSSQQSDEILSESPSPSDPVLPLPALIQEGRSTSVTNDKLTSKMNAEEDSEEMPSLLTSTVQVASDNLIPQIRDKEDPQEMPHSPLGSMPEIRDNSPEPNDPEEPQEVSSTPSDKKGKKRKRCIWSTPKRRHKKKSLPGGTASSRHGIQKKLKRVDQVPQKKDDSTCNSTVETRAQKARTECARKSRSEEIIDGTSEMNEGKRSQKTPSTPRRVTQGAASPGHGIQEKLQVVDKVTQRKDDSTWNSEVMMRVQKARTKCARKSRLKEKKKEKDICSSSKRRFQKNIHRRGKPKSDTVDFHCSKLPVTCGEAKGILYKKKMKHGSSVKCIRNEDGTWLTPNEFEVEGKGRNAKNWKRNIRCEGMTLGELLKRKNSDECEVCCQGGQLLCCGTCPRVFHEDCHIPPVEAKRMLWSCTFCRMKRSSGSQQCHHVSKTLERQMQPQDQLIRDYGEPFQEAMWLDLVKERLITEMYTVAWFVRDMRLMFRNHKTFYKASDFGQVGLDLEAEFEKDLKDVLGFHEANDGGFWTLP.

The 108-residue stretch at 1–108 (MFTMTRAMEE…IYRSFKRVGA (108 aa)) folds into the HSR domain. 2 disordered regions span residues 131-216 (SSLH…MPSL) and 231-385 (QIRD…GHGI). Positions 138–148 (ALPPPQPPQPS) are enriched in pro residues. Polar residues predominate over residues 159–168 (PGTSSQQSDE). Residues Ser-175 and Ser-177 each carry the phosphoserine modification. Polar residues predominate over residues 190 to 204 (GRSTSVTNDKLTSKM). Phosphoserine is present on residues Ser-244 and Ser-256. Basic residues predominate over residues 276–296 (KGKKRKRCIWSTPKRRHKKKS). The Nuclear localization signal motif lies at 281–294 (KRCIWSTPKRRHKK). 2 stretches are compositionally biased toward basic and acidic residues: residues 314–325 (RVDQVPQKKDDS) and 334–350 (RAQKARTECARKSRSEE). At Ser-380 the chain carries Phosphoserine. The Nuclear localization signal motif lies at 428–444 (KKKEKDICSSSKRRFQK). An SAND domain is found at 454 to 535 (SDTVDFHCSK…GELLKRKNSD (82 aa)). Residues 525–529 (LGELL) are nuclear hormone receptor interaction. A PHD-type zinc finger spans residues 534–580 (SDECEVCCQGGQLLCCGTCPRVFHEDCHIPPVEAKRMLWSCTFCRMK). One can recognise a Bromo domain in the interval 583–674 (SGSQQCHHVS…AEFEKDLKDV (92 aa)).

As to quaternary structure, (Microbial infection) Isoform 3 interacts with HCV core protein. Phosphorylated (isoform 2). As to expression, highly expressed in peripheral blood leukocytes and spleen. Detected at intermediate levels in thymus, prostate, testis, ovary, small intestine and colon, and at low levels in heart, brain, placenta, lung, liver, skeletal muscle, kidney and pancreas.

It is found in the nucleus. Transcription factor. May be a nuclear hormone receptor coactivator. Enhances transcription of genes with retinoic acid response elements (RARE). The protein is Sp110 nuclear body protein (SP110) of Homo sapiens (Human).